The following is a 244-amino-acid chain: Capsid protein (244 aa).

A Bipartite nuclear localization signal motif is present at residues 1–24 (MSTSKRKRGDDANWNKRTTKKKPS). Residues 1-39 (MSTSKRKRGDDANWNKRTTKKKPSSAGLKKAGSKAERPS) form a disordered region.

It belongs to the geminiviridae capsid protein family. Homomultimer. Interacts with the movement protein. Binds to single-stranded and double-stranded viral DNA.

The protein resides in the virion. Its subcellular location is the host nucleus. In terms of biological role, encapsidates the viral genome into characteristic twinned ('geminate') particles. Binds the genomic viral ssDNA and shuttles it into and out of the cell nucleus. Plays a role in protection of the genome from degradation, virus acquisition and transmission by insect vectors, infectivity, and systemic movement. The CP of monopartite geminiviruses is absolutely essential for virus movement. This chain is Capsid protein, found in Maize streak virus genotype B (isolate Tas) (MSV).